Here is an 882-residue protein sequence, read N- to C-terminus: Alanine--tRNA ligase (882 aa).

4 residues coordinate Zn(2+): His-563, His-567, Cys-665, and His-669.

Belongs to the class-II aminoacyl-tRNA synthetase family. Zn(2+) is required as a cofactor.

It localises to the cytoplasm. The catalysed reaction is tRNA(Ala) + L-alanine + ATP = L-alanyl-tRNA(Ala) + AMP + diphosphate. Functionally, catalyzes the attachment of alanine to tRNA(Ala) in a two-step reaction: alanine is first activated by ATP to form Ala-AMP and then transferred to the acceptor end of tRNA(Ala). Also edits incorrectly charged Ser-tRNA(Ala) and Gly-tRNA(Ala) via its editing domain. This Synechococcus sp. (strain RCC307) protein is Alanine--tRNA ligase.